The sequence spans 127 residues: Large ribosomal subunit protein bL12 (127 aa).

It belongs to the bacterial ribosomal protein bL12 family. In terms of assembly, homodimer. Part of the ribosomal stalk of the 50S ribosomal subunit. Forms a multimeric L10(L12)X complex, where L10 forms an elongated spine to which 2 to 4 L12 dimers bind in a sequential fashion. Binds GTP-bound translation factors.

Functionally, forms part of the ribosomal stalk which helps the ribosome interact with GTP-bound translation factors. Is thus essential for accurate translation. In Streptomyces griseus subsp. griseus (strain JCM 4626 / CBS 651.72 / NBRC 13350 / KCC S-0626 / ISP 5235), this protein is Large ribosomal subunit protein bL12.